Reading from the N-terminus, the 222-residue chain is Small ribosomal subunit protein uS2 (222 aa).

This sequence belongs to the universal ribosomal protein uS2 family.

The chain is Small ribosomal subunit protein uS2 from Karelsulcia muelleri (strain GWSS) (Sulcia muelleri).